The sequence spans 112 residues: B3 domain-containing protein At1g43171 (112 aa).

Positions 19–112 (DIVGNVALPK…FENKFIVLNF (94 aa)) form a DNA-binding region, TF-B3.

The protein localises to the nucleus. The protein is B3 domain-containing protein At1g43171 of Arabidopsis thaliana (Mouse-ear cress).